The chain runs to 499 residues: Glycerol kinase (499 aa).

An ADP-binding site is contributed by Thr-12. Residues Thr-12, Thr-13, and Ser-14 each contribute to the ATP site. Thr-12 contributes to the sn-glycerol 3-phosphate binding site. Arg-16 contributes to the ADP binding site. The sn-glycerol 3-phosphate site is built by Arg-82, Glu-83, Tyr-134, and Asp-243. Glycerol contacts are provided by Arg-82, Glu-83, Tyr-134, Asp-243, and Gln-244. 2 residues coordinate ADP: Thr-265 and Gly-308. 4 residues coordinate ATP: Thr-265, Gly-308, Gln-312, and Gly-409. Residues Gly-409 and Asn-413 each coordinate ADP.

It belongs to the FGGY kinase family. As to quaternary structure, homotetramer and homodimer (in equilibrium).

The catalysed reaction is glycerol + ATP = sn-glycerol 3-phosphate + ADP + H(+). It participates in polyol metabolism; glycerol degradation via glycerol kinase pathway; sn-glycerol 3-phosphate from glycerol: step 1/1. Its activity is regulated as follows. Activated by phosphorylation and inhibited by fructose 1,6-bisphosphate (FBP). Key enzyme in the regulation of glycerol uptake and metabolism. Catalyzes the phosphorylation of glycerol to yield sn-glycerol 3-phosphate. This Lachnoclostridium phytofermentans (strain ATCC 700394 / DSM 18823 / ISDg) (Clostridium phytofermentans) protein is Glycerol kinase.